The sequence spans 1541 residues: ATP-binding cassette sub-family C member 2 (1541 aa).

Topologically, residues 1–26 (MDKFCNSTFWDLSLLESPEADLPLCF) are extracellular. The N-linked (GlcNAc...) asparagine glycan is linked to Asn-6. Residues 27 to 47 (EQTVLVWIPLGFLWLLAPWQL) traverse the membrane as a helical segment. Residues 48–67 (YSVYRSRTKRSSITKFYLAK) lie on the Cytoplasmic side of the membrane. Residues 68 to 88 (QVFVVFLLILAAIDLSLALTE) form a helical membrane-spanning segment. Residues 89–92 (DTGQ) lie on the Extracellular side of the membrane. The chain crosses the membrane as a helical span at residues 93–113 (ATVPPVRYTNPILYLCTWLLV). At 114–125 (LAVQHSRQWCVR) the chain is on the cytoplasmic side. Residues 126–146 (KNSWFLSLFWILSVLCGVFQF) traverse the membrane as a helical segment. The Extracellular segment spans residues 147 to 164 (QTLIRALLKDSKSNMAYS). A helical membrane pass occupies residues 165 to 185 (YLFFVSYGFQIVLLILTAFSG). At 186-309 (PSDSTQTPSV…DYPKSWLIKS (124 aa)) the chain is on the cytoplasmic side. Phosphoserine occurs at positions 279 and 281. The chain crosses the membrane as a helical span at residues 310–330 (LFKTFHVVILKSFILKLIHDL). An ABC transmembrane type-1 1 domain is found at 318–601 (ILKSFILKLI…LPMVTSSILQ (284 aa)). The Extracellular segment spans residues 331–356 (LVFLNPQLLKLLIGFVKSSNSYVWFG). The helical transmembrane segment at 357-377 (YICAILMFAVTLIQSFCLQSY) threads the bilayer. Topologically, residues 378 to 433 (FQHCFVLGMCVRTTVMSSIYKKALTLSNLARKQYTIGETVNLMSVDSQKLMDATNY) are cytoplasmic. The helical transmembrane segment at 434 to 454 (MQLVWSSVIQITLSIFFLWRE) threads the bilayer. Residues 455 to 457 (LGP) lie on the Extracellular side of the membrane. A helical transmembrane segment spans residues 458 to 478 (SILAGVGVMVLLIPVNGVLAT). Residues 479 to 540 (KIRNIQVQNM…NLLRFGQLQS (62 aa)) lie on the Cytoplasmic side of the membrane. Residues 541–561 (LLIFILQITPILVSVVTFSVY) form a helical membrane-spanning segment. Topologically, residues 562–583 (VLVDSANVLNAEKAFTSITLFN) are extracellular. The chain crosses the membrane as a helical span at residues 584-604 (ILRFPLSMLPMVTSSILQASV). Topologically, residues 605 to 967 (SVDRLERYLG…VKFSIYLKYL (363 aa)) are cytoplasmic. The region spanning 633-857 (VKFSEASFTW…KGVFARNWKT (225 aa)) is the ABC transporter 1 domain. 667–674 (GTVGSGKS) contacts ATP. Disordered regions lie at residues 862 to 881 (SGPE…DDDD) and 901 to 923 (RENS…GKSL). The residue at position 874 (Ser-874) is a Phosphoserine. Positions 906 to 915 (RRTLSRSSRS) are enriched in low complexity. A phosphoserine mark is found at Ser-922 and Ser-926. Residues 968 to 988 (QAVGWWSILFIILFYGLNNVA) traverse the membrane as a helical segment. An ABC transmembrane type-1 2 domain is found at 975 to 1260 (ILFIILFYGL…LVRMTSEAET (286 aa)). The Extracellular segment spans residues 989–1029 (FIGSNLWLSAWTSDSDNLNGTNNSSSHRDMRIGVFGALGLA). 3 N-linked (GlcNAc...) asparagine glycosylation sites follow: Asn-1007, Asn-1010, and Asn-1011. Residues 1030-1050 (QGICLLISTLWSIYACRNASK) form a helical membrane-spanning segment. At 1051 to 1093 (ALHGQLLTNILRAPMRFFDTTPTGRIVNRFSGDISTVDDLLPQ) the chain is on the cytoplasmic side. A helical membrane pass occupies residues 1094–1114 (TLRSWMMCFFGIAGTLVMICM). Position 1115 (Ala-1115) is a topological domain, extracellular. Residues 1116–1136 (TPVFAIIIIPLSILYISVQVF) form a helical membrane-spanning segment. Residues 1137–1207 (YVATSRQLRR…TSNRWLAIRL (71 aa)) are Cytoplasmic-facing. Residues 1208 to 1228 (ELVGNLVVFCSALLLVIYRKT) traverse the membrane as a helical segment. Residues 1229 to 1230 (LT) are Extracellular-facing. A helical transmembrane segment spans residues 1231-1251 (GDVVGFVLSNALNITQTLNWL). The Cytoplasmic portion of the chain corresponds to 1252-1541 (VRMTSEAETN…GIENVNHTEL (290 aa)). The region spanning 1296-1530 (IQFNNYQVRY…RGSFYLMAKE (235 aa)) is the ABC transporter 2 domain. 1330–1337 (GRTGAGKS) is an ATP binding site. Residue Ser-1434 is modified to Phosphoserine.

It belongs to the ABC transporter superfamily. ABCC family. Conjugate transporter (TC 3.A.1.208) subfamily. As to expression, mainly expressed in the liver.

The protein localises to the apical cell membrane. It carries out the reaction an S-substituted glutathione(in) + ATP + H2O = an S-substituted glutathione(out) + ADP + phosphate + H(+). It catalyses the reaction taurolithocholate 3-sulfate(in) + ATP + H2O = taurolithocholate 3-sulfate(out) + ADP + phosphate + H(+). The catalysed reaction is ATP + H2O + xenobioticSide 1 = ADP + phosphate + xenobioticSide 2.. The enzyme catalyses 17beta-estradiol 17-O-(beta-D-glucuronate)(in) + ATP + H2O = 17beta-estradiol 17-O-(beta-D-glucuronate)(out) + ADP + phosphate + H(+). It carries out the reaction leukotriene C4(in) + ATP + H2O = leukotriene C4(out) + ADP + phosphate + H(+). It catalyses the reaction (4Z,15Z)-bilirubin IXalpha C8-beta-D-glucuronoside(in) + ATP + H2O = (4Z,15Z)-bilirubin IXalpha C8-beta-D-glucuronoside(out) + ADP + phosphate + H(+). The catalysed reaction is (4Z,15Z)-bilirubin IXalpha C8,C12-beta-D-bisglucuronoside(in) + ATP + H2O = (4Z,15Z)-bilirubin IXalpha C8,C12-beta-D-bisglucuronoside(out) + ADP + phosphate + H(+). ATP-dependent transporter of the ATP-binding cassette (ABC) family that binds and hydrolyzes ATP to enable active transport of various substrates including many drugs, toxicants and endogenous compound across cell membranes. Transports a wide variety of conjugated organic anions such as sulfate-, glucuronide- and glutathione (GSH)-conjugates of endo- and xenobiotics substrates. Mediates hepatobiliary excretion of mono- and bis-glucuronidated bilirubin molecules and therefore play an important role in bilirubin detoxification. Also mediates hepatobiliary excretion of others glucuronide conjugates such as 17beta-estradiol 17-glucosiduronic acid and leukotriene C4. Transports sulfated bile salt such as taurolithocholate sulfate. Transports various anticancer drugs, such as anthracycline, vinca alkaloid and methotrexate and HIV-drugs such as protease inhibitors. This Rattus norvegicus (Rat) protein is ATP-binding cassette sub-family C member 2.